The chain runs to 133 residues: Small ribosomal subunit protein uS8 (133 aa).

Belongs to the universal ribosomal protein uS8 family. As to quaternary structure, part of the 30S ribosomal subunit. Contacts proteins S5 and S12.

One of the primary rRNA binding proteins, it binds directly to 16S rRNA central domain where it helps coordinate assembly of the platform of the 30S subunit. This Deinococcus deserti (strain DSM 17065 / CIP 109153 / LMG 22923 / VCD115) protein is Small ribosomal subunit protein uS8.